Here is a 107-residue protein sequence, read N- to C-terminus: Phosphoribosyl-ATP pyrophosphatase (107 aa).

It belongs to the PRA-PH family.

It is found in the cytoplasm. The enzyme catalyses 1-(5-phospho-beta-D-ribosyl)-ATP + H2O = 1-(5-phospho-beta-D-ribosyl)-5'-AMP + diphosphate + H(+). The protein operates within amino-acid biosynthesis; L-histidine biosynthesis; L-histidine from 5-phospho-alpha-D-ribose 1-diphosphate: step 2/9. In Bacillus cytotoxicus (strain DSM 22905 / CIP 110041 / 391-98 / NVH 391-98), this protein is Phosphoribosyl-ATP pyrophosphatase.